Here is a 502-residue protein sequence, read N- to C-terminus: Sulfate adenylyltransferase (502 aa).

An N-terminal region spans residues 1–167 (MPSPHGGVLQ…LEAIQLPVHY (167 aa)). The catalytic stretch occupies residues 168–393 (DYPGWRKTPA…LRESNPSRPK (226 aa)). Q195 lines the sulfate pocket. ATP-binding positions include 195–198 (QTRN) and 289–292 (GRDH). Active-site residues include T196, R197, and N198. Residue R197 participates in sulfate binding. Sulfate is bound at residue A293. ATP is bound at residue V331. Residues 394–502 (QGFALVLSET…FLEDQGFFQF (109 aa)) are required for oligomerization; adenylyl-sulfate kinase-like.

Belongs to the sulfate adenylyltransferase family. Homohexamer. Dimer of trimers.

It is found in the cytoplasm. It carries out the reaction sulfate + ATP + H(+) = adenosine 5'-phosphosulfate + diphosphate. Its pathway is sulfur metabolism; hydrogen sulfide biosynthesis; sulfite from sulfate: step 1/3. Functionally, catalyzes the first intracellular reaction of sulfate assimilation, forming adenosine-5'-phosphosulfate (APS) from inorganic sulfate and ATP. Plays an important role in sulfate activation as a component of the biosynthesis pathway of sulfur-containing amino acids. In Kluyveromyces lactis (strain ATCC 8585 / CBS 2359 / DSM 70799 / NBRC 1267 / NRRL Y-1140 / WM37) (Yeast), this protein is Sulfate adenylyltransferase.